Consider the following 601-residue polypeptide: Dual specificity tyrosine-phosphorylation-regulated kinase 2 (601 aa).

Positions 1–24 (MLTRKPSAAAPAAYPTGRGGDSAV) are disordered. S30 carries the post-translational modification Phosphoserine. At T106 the chain carries Phosphothreonine; by ATM. The Nuclear localization signal motif lies at 189–191 (KKR). In terms of domain architecture, Protein kinase spans 222–535 (YEVLKVIGKG…PGQALRHPWL (314 aa)). ATP contacts are provided by residues 228–236 (IGKGSFGQV), K251, and 301–304 (FELL). D348 (proton acceptor) is an active-site residue. The residue at position 381 (T381) is a Phosphothreonine; by MAP3K10. Y382 carries the post-translational modification Phosphotyrosine; by autocatalysis. S442 bears the Phosphoserine; by ATM mark. S449 bears the Phosphoserine; by MAP3K10 mark.

The protein belongs to the protein kinase superfamily. CMGC Ser/Thr protein kinase family. MNB/DYRK subfamily. In terms of assembly, component of an E3 ligase complex containing DYRK2, EDD/UBR5, DDB1 and DCAF1 (EDVP complex). Interacts directly with EDD/UBR5, DDB1 and DCAF1. Interacts with SIAH2 and MDM2. Interacts with MAP3K10 and NFATC1. May also interact with CCNL2. Mg(2+) serves as cofactor. Requires Mn(2+) as cofactor. Autophosphorylates cotranslationally on the second tyrosine residue in the Tyr-X-Tyr motif in the activation loop, but once mature, does not have any protein tyrosine kinase activity. Phosphorylated at Thr-106 and Ser-442 by ATM in response to genotoxic stress. Post-translationally, under normal conditions, polyubiquitinated in the nucleus by MDM2, leading to its proteasomal degradation. Phosphorylation on Thr-106 and Ser-442 by ATM in response to genotoxic stress disrupts MDM2 binding and prevents MDM2-mediated ubiquitination and subsequent proteasomal degradation. Polyubiquitinated by SIAH2, leading to its proteasomal degradation. Polyubiquitinated by SIAH2 occurs under normal conditions, and is enhanced in response to hypoxia. As to expression, testis, after the onset of spermatogenesis.

It is found in the cytoplasm. The protein resides in the nucleus. It catalyses the reaction L-seryl-[protein] + ATP = O-phospho-L-seryl-[protein] + ADP + H(+). The enzyme catalyses L-threonyl-[protein] + ATP = O-phospho-L-threonyl-[protein] + ADP + H(+). It carries out the reaction L-tyrosyl-[protein] + ATP = O-phospho-L-tyrosyl-[protein] + ADP + H(+). Its activity is regulated as follows. Activated by autophosphorylation on the second tyrosine residue in the Tyr-X-Tyr motif in the activation loop. Inhibited by acridine analogs, purvalanol, and barely by harmine. Inhibited by leucettine and leucettine derivatives. Serine/threonine-protein kinase involved in the regulation of the mitotic cell cycle, cell proliferation, apoptosis, organization of the cytoskeleton and neurite outgrowth. Functions in part via its role in ubiquitin-dependent proteasomal protein degradation. Functions downstream of ATM and phosphorylates p53/TP53 at 'Ser-46', and thereby contributes to the induction of apoptosis in response to DNA damage. Phosphorylates NFATC1, and thereby inhibits its accumulation in the nucleus and its transcription factor activity. Phosphorylates EIF2B5 at 'Ser-544', enabling its subsequent phosphorylation and inhibition by GSK3B. Likewise, phosphorylation of NFATC1, CRMP2/DPYSL2 and CRMP4/DPYSL3 promotes their subsequent phosphorylation by GSK3B. May play a general role in the priming of GSK3 substrates. Inactivates GYS1 by phosphorylation at 'Ser-641', and potentially also a second phosphorylation site, thus regulating glycogen synthesis. Mediates EDVP E3 ligase complex formation and is required for the phosphorylation and subsequent degradation of KATNA1. Phosphorylates TERT at 'Ser-457', promoting TERT ubiquitination by the EDVP complex. Phosphorylates SIAH2, and thereby increases its ubiquitin ligase activity. Promotes the proteasomal degradation of MYC and JUN, and thereby regulates progress through the mitotic cell cycle and cell proliferation. Promotes proteasomal degradation of GLI2 and GLI3, and thereby plays a role in smoothened and sonic hedgehog signaling. Plays a role in cytoskeleton organization and neurite outgrowth via its phosphorylation of DCX and DPYSL2. Phosphorylates CRMP2/DPYSL2, CRMP4/DPYSL3, DCX, EIF2B5, EIF4EBP1, GLI2, GLI3, GYS1, JUN, MDM2, MYC, NFATC1, p53/TP53, TAU/MAPT and KATNA1. Can phosphorylate histone H1, histone H3 and histone H2B (in vitro). Can phosphorylate CARHSP1 (in vitro). In Homo sapiens (Human), this protein is Dual specificity tyrosine-phosphorylation-regulated kinase 2 (DYRK2).